We begin with the raw amino-acid sequence, 231 residues long: Large ribosomal subunit protein uL1 (231 aa).

Belongs to the universal ribosomal protein uL1 family. In terms of assembly, part of the 50S ribosomal subunit.

Functionally, binds directly to 23S rRNA. The L1 stalk is quite mobile in the ribosome, and is involved in E site tRNA release. Its function is as follows. Protein L1 is also a translational repressor protein, it controls the translation of the L11 operon by binding to its mRNA. In Francisella philomiragia subsp. philomiragia (strain ATCC 25017 / CCUG 19701 / FSC 153 / O#319-036), this protein is Large ribosomal subunit protein uL1.